Consider the following 1258-residue polypeptide: Structural polyprotein (1258 aa).

A host transcription inhibition region spans residues proline 41–proline 75. The disordered stretch occupies residues arginine 59 to arginine 114. A Nuclear localization signal motif is present at residues glutamine 68 to proline 109. 2 stretches are compositionally biased toward basic residues: residues glutamine 69 to proline 84 and threonine 93 to arginine 114. A binding to the viral RNA region spans residues lysine 96–isoleucine 124. A ribosome-binding region spans residues proline 109 to cysteine 123. Cysteines 123 and 138 form a disulfide. One can recognise a Peptidase S3 domain in the interval cysteine 123–tryptophan 271. Histidine 149 acts as the Charge relay system in catalysis. The Nuclear export signal signature appears at isoleucine 154–phenylalanine 164. An interaction with spike glycoprotein E2 region spans residues lysine 165–tyrosine 170. The active-site Charge relay system is aspartate 171. The interval proline 193–alanine 203 is dimerization of the capsid protein. The Charge relay system role is filled by serine 223. A dimerization of the capsid protein region spans residues aspartate 229–arginine 233. The segment at threonine 272 to leucine 284 is functions as an uncleaved signal peptide for the precursor of protein E3/E2. Cystine bridges form between cysteine 279/cysteine 288, cysteine 293/cysteine 297, cysteine 296/cysteine 328, cysteine 356/cysteine 462, cysteine 359/cysteine 365, cysteine 428/cysteine 442, cysteine 490/cysteine 601, cysteine 538/cysteine 562, and cysteine 540/cysteine 557. An N-linked (GlcNAc...) asparagine; by host glycan is attached at asparagine 283. Topologically, residues glycine 338–glycine 696 are extracellular. 2 interaction with host Mxra8 receptor regions span residues glutamine 363–tyrosine 366 and histidine 399–tryptophan 401. Residues threonine 521 to lysine 524 form an interaction with host Mxra8 receptor region. An N-linked (GlcNAc...) asparagine; by host glycan is attached at asparagine 537. The interaction with host Mxra8 receptor stretch occupies residues glutamate 553 to valine 559. N-linked (GlcNAc...) asparagine; by host glycosylation occurs at asparagine 598. Residues leucine 697–leucine 717 form a helical membrane-spanning segment. Residues serine 718 to alanine 758 are Cytoplasmic-facing. Residues serine 726 to lysine 730 form an interaction with the capsid protein region. Residues cysteine 731, cysteine 751, and cysteine 752 are each lipidated (S-palmitoyl cysteine; by host). The interval cysteine 731–cysteine 751 is transient transmembrane before p62-6K protein processing. A disulfide bridge connects residues cysteine 731 and cysteine 752. The Extracellular portion of the chain corresponds to alanine 759–glutamine 773. Residues threonine 774–leucine 794 traverse the membrane as a helical segment. The Cytoplasmic segment spans residues arginine 795 to histidine 796. The helical transmembrane segment at leucine 797–threonine 817 threads the bilayer. 2 consecutive stretches face the extracellular side: residues glutamine 818–alanine 819 and tyrosine 820–glycine 1234. Intrachain disulfides connect cysteine 868–cysteine 933, cysteine 881–cysteine 913, cysteine 882–cysteine 915, and cysteine 887–cysteine 897. Positions valine 903–threonine 920 are E1 fusion peptide loop. N-linked (GlcNAc...) asparagine; by host glycans are attached at residues asparagine 960 and asparagine 1089. Cystine bridges form between cysteine 1078-cysteine 1090, cysteine 1120-cysteine 1195, cysteine 1125-cysteine 1199, and cysteine 1147-cysteine 1189. A helical membrane pass occupies residues glycine 1235–phenylalanine 1255. Cysteine 1252 carries the S-palmitoyl cysteine; by host lipid modification. Residues serine 1256–histidine 1258 lie on the Cytoplasmic side of the membrane.

Homodimer. Homomultimer. Interacts with host karyopherin KPNA4; this interaction allows the nuclear import of the viral capsid protein. Interacts with spike glycoprotein E2. Interacts with host IRAK1; the interaction leads to inhibition of IRAK1-dependent signaling. In terms of assembly, the precursor of protein E3/E2 and E1 form a heterodimer shortly after synthesis. As to quaternary structure, the precursor of protein E3/E2 and E1 form a heterodimer shortly after synthesis. Processing of the precursor of protein E3/E2 into E2 and E3 results in a heterodimer of the spike glycoproteins E2 and E1. Spike at virion surface are constituted of a trimer of E2-E1 heterodimers. After target cell attachment and endocytosis, E1 change conformation to form homotrimers. Interacts with 6K protein. Interacts with spike glycoprotein E1. Processing of the precursor of protein E3/E2 into E2 and E3 results in a heterodimer of the spike glycoproteins E2 and E1. Spike at virion surface are constituted of a trimer of E2-E1 heterodimers. Interacts with 6K protein. Interacts with host MXRA8; this interaction mediates virus entry. In terms of assembly, oligomer. Interacts with spike glycoprotein E1. Interacts with spike glycoprotein E2. In terms of processing, structural polyprotein: Specific enzymatic cleavages in vivo yield mature proteins. Capsid protein is auto-cleaved during polyprotein translation, unmasking a signal peptide at the N-terminus of the precursor of E3/E2. The remaining polyprotein is then targeted to the host endoplasmic reticulum, where host signal peptidase cleaves it into pE2, 6K and E1 proteins. pE2 is further processed to mature E3 and E2 by host furin in trans-Golgi vesicle. Palmitoylated via thioester bonds. These palmitoylations may induce disruption of the C-terminus transmembrane. This would result in the reorientation of E2 C-terminus from lumenal to cytoplasmic side. Post-translationally, N-glycosylated. In terms of processing, palmitoylated via thioester bonds.

It localises to the virion. Its subcellular location is the host cytoplasm. The protein localises to the host cell membrane. The protein resides in the host nucleus. It is found in the virion membrane. It localises to the host Golgi apparatus. Its subcellular location is the host trans-Golgi network. The protein localises to the host endoplasmic reticulum. The catalysed reaction is Autocatalytic release of the core protein from the N-terminus of the togavirus structural polyprotein by hydrolysis of a -Trp-|-Ser- bond.. In terms of biological role, forms an icosahedral capsid with a T=4 symmetry composed of 240 copies of the capsid protein surrounded by a lipid membrane through which penetrate 80 spikes composed of trimers of E1-E2 heterodimers. The capsid protein binds to the viral RNA genome at a site adjacent to a ribosome binding site for viral genome translation following genome release. Possesses a protease activity that results in its autocatalytic cleavage from the nascent structural protein. Following its self-cleavage, the capsid protein transiently associates with ribosomes, and within several minutes the protein binds to viral RNA and rapidly assembles into icosahedric core particles. The resulting nucleocapsid eventually associates with the cytoplasmic domain of the spike glycoprotein E2 at the cell membrane, leading to budding and formation of mature virions. In case of infection, new virions attach to target cells and after clathrin-mediated endocytosis their membrane fuses with the host endosomal membrane. This leads to the release of the nucleocapsid into the cytoplasm, followed by an uncoating event necessary for the genomic RNA to become accessible. The uncoating might be triggered by the interaction of capsid proteins with ribosomes. Binding of ribosomes would release the genomic RNA since the same region is genomic RNA-binding and ribosome-binding. Specifically inhibits interleukin-1 receptor-associated kinase 1/IRAK1-dependent signaling during viral entry, representing a means by which the alphaviruses may evade innate immune detection and activation prior to viral gene expression. Provides the signal sequence for the translocation of the precursor of protein E3/E2 to the host endoplasmic reticulum. Furin-cleaved E3 remains associated with spike glycoprotein E1 and mediates pH protection of the latter during the transport via the secretory pathway. After virion release from the host cell, the assembly protein E3 is gradually released in the extracellular space. Its function is as follows. Plays a role in viral attachment to target host cell, by binding to the cell receptor MXRA8. Synthesized as a p62 precursor which is processed by furin at the cell membrane just before virion budding, giving rise to E2-E1 heterodimer. The p62-E1 heterodimer is stable, whereas E2-E1 is unstable and dissociate at low pH. p62 is processed at the last step, presumably to avoid E1 fusion activation before its final export to cell surface. E2 C-terminus contains a transitory transmembrane that would be disrupted by palmitoylation, resulting in reorientation of the C-terminal tail from lumenal to cytoplasmic side. This step is critical since E2 C-terminus is involved in budding by interacting with capsid proteins. This release of E2 C-terminus in cytoplasm occurs lately in protein export, and precludes premature assembly of particles at the endoplasmic reticulum membrane. Functionally, acts as a viroporin that participates in virus glycoprotein processing and transport to the plasma membrane, cell permeabilization and budding of viral particles. Disrupts the calcium homeostasis of the cell, probably at the endoplasmic reticulum level. This leads to cytoplasmic calcium elevation. Because of its lipophilic properties, the 6K protein is postulated to influence the selection of lipids that interact with the transmembrane domains of the glycoproteins, which, in turn, affects the deformability of the bilayer required for the extreme curvature that occurs as budding proceeds. Present in low amount in virions, about 3% compared to viral glycoproteins. In terms of biological role, class II viral fusion protein. Fusion activity is inactive as long as E1 is bound to E2 in mature virion. After virus attachment to target cell and endocytosis, acidification of the endosome induce dissociation of E1/E2 heterodimer and concomitant trimerization of the E1 subunits. This E1 trimer is fusion active, and promotes release of viral nucleocapsid in cytoplasm after endosome and viral membrane fusion. Efficient fusion requires the presence of cholesterol and sphingolipid in the target membrane. The protein is Structural polyprotein of Middelburg virus.